We begin with the raw amino-acid sequence, 1677 residues long: Vitellogenin (1677 aa).

An N-terminal signal peptide occupies residues 1–8 (LTIALVGS). Residues 17-655 (FSGSKTYQYK…NAASILPSAV (639 aa)) form the Vitellogenin domain. Disordered stretches follow at residues 1089–1232 (TLRG…SEEI) and 1252–1280 (FQNK…SKQD). The span at 1098 to 1122 (SSSSSSSSSSSSSSSSSSSSSSQQS) shows a compositional bias: low complexity. Positions 1123–1145 (RMEKRMEQDKLTENLERDRDHMR) are enriched in basic and acidic residues. The span at 1169-1196 (SSSSSSSSSSSGSNSSSSSSSSSSSSSR) shows a compositional bias: low complexity. N1182, N1202, N1217, and N1218 each carry an N-linked (GlcNAc...) asparagine glycan. Residues 1197-1212 (SHNHRNNTRTLSKSKR) are compositionally biased toward basic residues. Low complexity-rich tracts occupy residues 1215–1229 (NNNN…SSSS) and 1260–1273 (SSSS…SSQS). One can recognise a VWFD domain in the interval 1490–1675 (SKCVAQENKF…TATEAASFCV (186 aa)). 2 disulfides stabilise this stretch: C1492–C1631 and C1515–C1674. Residues 1636-1649 (GERRKEFRMPDGRQ) are compositionally biased toward basic and acidic residues. The disordered stretch occupies residues 1636-1659 (GERRKEFRMPDGRQARGPSVSPTP).

In terms of processing, phosvitin, an egg yolk storage protein, is one of the most highly phosphorylated (10%) proteins in nature. In terms of tissue distribution, found in liver, testis and undifferentiated gonads of estrogen-treated fish. Not detected in the brain and spleen.

In terms of biological role, precursor of the major egg-yolk proteins that are sources of nutrients during early development of oviparous organisms. The polypeptide is Vitellogenin (Acipenser transmontanus (White sturgeon)).